We begin with the raw amino-acid sequence, 325 residues long: uncharacterized protein (325 aa).

The segment at 108–141 is disordered; that stretch reads PHRTQGISSTSSKSSKGGKKTPVRSTPKEIKKAT.

This is an uncharacterized protein from Homo sapiens (Human).